The following is a 77-amino-acid chain: Apidermin 2 (77 aa).

The N-terminal stretch at 1 to 16 (MKSLLILFAIVAVVAA) is a signal peptide.

Expressed in the epidermis, hypopharyngeal glands, fat body, trachea, esophagus and stomach.

It is found in the secreted. In terms of biological role, antimicrobial peptide that binds cell wall carbohydrates of microbial symbionts and induces structural damage. Binds the cell wall carbohydrates mannan, N-acetyl-D-glucosamine and lipopolysaccharide. Can target fungi, Gram-negative and Gram-positive bacteria. The chain is Apidermin 2 from Apis mellifera (Honeybee).